The primary structure comprises 253 residues: Triosephosphate isomerase (253 aa).

Substrate is bound at residue 9-11; the sequence is NWK. The active-site Electrophile is the H95. E167 (proton acceptor) is an active-site residue. Substrate is bound by residues G173, S213, and 234–235; that span reads GG. S213 carries the phosphoserine modification.

The protein belongs to the triosephosphate isomerase family. As to quaternary structure, homodimer.

The protein localises to the cytoplasm. The enzyme catalyses D-glyceraldehyde 3-phosphate = dihydroxyacetone phosphate. The protein operates within carbohydrate biosynthesis; gluconeogenesis. It participates in carbohydrate degradation; glycolysis; D-glyceraldehyde 3-phosphate from glycerone phosphate: step 1/1. Its function is as follows. Involved in the gluconeogenesis. Catalyzes stereospecifically the conversion of dihydroxyacetone phosphate (DHAP) to D-glyceraldehyde-3-phosphate (G3P). In Bacillus subtilis (strain 168), this protein is Triosephosphate isomerase.